The following is a 232-amino-acid chain: Biosynthetic peptidoglycan transglycosylase (232 aa).

A helical membrane pass occupies residues 14 to 34 (AAVALVLLYQLWIFAHVLWWI).

The protein belongs to the glycosyltransferase 51 family.

Its subcellular location is the cell inner membrane. The catalysed reaction is [GlcNAc-(1-&gt;4)-Mur2Ac(oyl-L-Ala-gamma-D-Glu-L-Lys-D-Ala-D-Ala)](n)-di-trans,octa-cis-undecaprenyl diphosphate + beta-D-GlcNAc-(1-&gt;4)-Mur2Ac(oyl-L-Ala-gamma-D-Glu-L-Lys-D-Ala-D-Ala)-di-trans,octa-cis-undecaprenyl diphosphate = [GlcNAc-(1-&gt;4)-Mur2Ac(oyl-L-Ala-gamma-D-Glu-L-Lys-D-Ala-D-Ala)](n+1)-di-trans,octa-cis-undecaprenyl diphosphate + di-trans,octa-cis-undecaprenyl diphosphate + H(+). It participates in cell wall biogenesis; peptidoglycan biosynthesis. In terms of biological role, peptidoglycan polymerase that catalyzes glycan chain elongation from lipid-linked precursors. This chain is Biosynthetic peptidoglycan transglycosylase, found in Thiobacillus denitrificans (strain ATCC 25259 / T1).